Here is a 60-residue protein sequence, read N- to C-terminus: Large ribosomal subunit protein uL30 (60 aa).

It belongs to the universal ribosomal protein uL30 family. As to quaternary structure, part of the 50S ribosomal subunit.

The protein is Large ribosomal subunit protein uL30 of Dehalococcoides mccartyi (strain ATCC BAA-2266 / KCTC 15142 / 195) (Dehalococcoides ethenogenes (strain 195)).